The following is a 685-amino-acid chain: Frizzled-8 (685 aa).

Positions 1-27 (MEWGYLLEVTSLLAALAVLQRSSGAAA) are cleaved as a signal peptide. At 28-272 (ASAKELACQE…NPFFSQDERA (245 aa)) the chain is on the extracellular side. The region spanning 30 to 151 (AKELACQEIT…GNPDTLCMDY (122 aa)) is the FZ domain. Cystine bridges form between Cys-35–Cys-96, Cys-43–Cys-89, Cys-80–Cys-118, Cys-107–Cys-148, and Cys-111–Cys-135. Asn-49 carries N-linked (GlcNAc...) asparagine glycosylation. 71–78 (QFWPLVEI) serves as a coordination point for hexadecanoate. The wnt-binding stretch occupies residues 95 to 100 (ICLEDY). Residues 147–152 (LCMDYN) are wnt-binding. Asn-152 carries an N-linked (GlcNAc...) asparagine glycan. A disordered region spans residues 155–223 (DLTTAAPSPP…KARPPGGGAA (69 aa)). The span at 161–176 (PSPPRRLPPPPPPGEQ) shows a compositional bias: pro residues. Low complexity-rich tracts occupy residues 177 to 187 (PPSGSGHSRPP) and 200 to 223 (GSGDAAAAPPSRGGKARPPGGGAA). A helical membrane pass occupies residues 273 to 293 (FTVFWIGLWSVLCFVSTFATV). Residues 294-309 (STFLIDMERFKYPERP) lie on the Cytoplasmic side of the membrane. A helical transmembrane segment spans residues 310–330 (IIFLSACYLFVSVGYLVRLVA). Topologically, residues 331-394 (GHEKVACSGG…RYETTGPALC (64 aa)) are extracellular. Residues 395-415 (TVVFLLVYFFGMASSIWWVIL) traverse the membrane as a helical segment. Residues 416–437 (SLTWFLAAGMKWGNEAIAGYSQ) lie on the Cytoplasmic side of the membrane. Residues 438 to 458 (YFHLAAWLVPSVKSIAVLALS) form a helical membrane-spanning segment. Over 459 to 481 (SVDGDPVAGICYVGNQSLDNLRG) the chain is Extracellular. Residue Asn-473 is glycosylated (N-linked (GlcNAc...) asparagine). A helical transmembrane segment spans residues 482–502 (FVLAPLVIYLFIGTMFLLAGF). Topologically, residues 503–530 (VSLFRIRSVIKQQGGPTKTHKLEKLMIR) are cytoplasmic. The helical transmembrane segment at 531-551 (LGLFTVLYTVPAAVVVACLFY) threads the bilayer. Over 552 to 582 (EQHNRPRWEATHNCPCLRDLQPDQARRPDYA) the chain is Extracellular. The helical transmembrane segment at 583–603 (VFMLKYFMCLVVGITSGVWVW) threads the bilayer. Residues 604-685 (SGKTLESWRA…YPKQMPLSQV (82 aa)) are Cytoplasmic-facing. The Lys-Thr-X-X-X-Trp motif, mediates interaction with the PDZ domain of Dvl family members signature appears at 606–611 (KTLESW). Residues 631–655 (AGGSGPGGSGPGPGGGGGHGGGGGS) are compositionally biased toward gly residues. The disordered stretch occupies residues 631-656 (AGGSGPGGSGPGPGGGGGHGGGGGSL). The PDZ-binding signature appears at 683 to 685 (SQV).

The protein belongs to the G-protein coupled receptor Fz/Smo family. As to quaternary structure, component of a Wnt-signaling complex that contains a WNT protein, a FZD protein and LRP5 or LRP6. Interacts directly with LRP5 or LRP6; the interaction is promoted by Wnt-binding and signaling and inhibited by DKK1. Interacts (via the PDZ-binding motif) with GPOC (via its PDZ domain). Interacts with RSPO1 and RSPO3. Interacts with glypican GPC3. Post-translationally, ubiquitinated by ZNRF3, leading to its degradation by the proteasome. As to expression, expressed in chondrocytes.

The protein resides in the membrane. It localises to the golgi apparatus. The protein localises to the cell membrane. Functionally, receptor for Wnt proteins. Component of the Wnt-Fzd-LRP5-LRP6 complex that triggers beta-catenin signaling through inducing aggregation of receptor-ligand complexes into ribosome-sized signalosomes. The beta-catenin canonical signaling pathway leads to the activation of disheveled proteins, inhibition of GSK-3 kinase, nuclear accumulation of beta-catenin and activation of Wnt target genes. A second signaling pathway involving PKC and calcium fluxes has been seen for some family members, but it is not yet clear if it represents a distinct pathway or if it can be integrated in the canonical pathway, as PKC seems to be required for Wnt-mediated inactivation of GSK-3 kinase. Both pathways seem to involve interactions with G-proteins. May be involved in transduction and intercellular transmission of polarity information during tissue morphogenesis and/or in differentiated tissues. Coreceptor along with RYK of Wnt proteins, such as WNT1. In Mus musculus (Mouse), this protein is Frizzled-8 (Fzd8).